The primary structure comprises 872 residues: Alanine--tRNA ligase (872 aa).

Zn(2+)-binding residues include His-567, His-571, Cys-669, and His-673.

Belongs to the class-II aminoacyl-tRNA synthetase family. It depends on Zn(2+) as a cofactor.

It is found in the cytoplasm. The enzyme catalyses tRNA(Ala) + L-alanine + ATP = L-alanyl-tRNA(Ala) + AMP + diphosphate. Functionally, catalyzes the attachment of alanine to tRNA(Ala) in a two-step reaction: alanine is first activated by ATP to form Ala-AMP and then transferred to the acceptor end of tRNA(Ala). Also edits incorrectly charged Ser-tRNA(Ala) and Gly-tRNA(Ala) via its editing domain. This chain is Alanine--tRNA ligase, found in Streptococcus sanguinis (strain SK36).